We begin with the raw amino-acid sequence, 407 residues long: Guanine nucleotide-binding protein alpha-1 subunit (407 aa).

The N-myristoyl glycine moiety is linked to residue glycine 2. The S-palmitoyl cysteine moiety is linked to residue cysteine 3. The region spanning 73–407 (NDIKVLLLGA…MSNNLQSLMF (335 aa)) is the G-alpha domain. The segment at 76–89 (KVLLLGAGDSGKTT) is G1 motif. Residues aspartate 84, serine 85, glycine 86, lysine 87, threonine 88, threonine 89, aspartate 190, leucine 215, threonine 221, glycine 243, asparagine 309, lysine 310, aspartate 312, and alanine 380 each contribute to the GTP site. Residue threonine 88 coordinates Mg(2+). The segment at 213-221 (DILHCRIKT) is G2 motif. Threonine 221 lines the Mg(2+) pocket. Residues 236–245 (YRFFDVGGQR) are G3 motif. Residues 305 to 312 (ILFLNKLD) form a G4 motif region. The interval 378 to 383 (TTATDT) is G5 motif.

The protein belongs to the G-alpha family. G(q) subfamily. In terms of assembly, g proteins are composed of 3 units; alpha, beta and gamma. The alpha chain contains the guanine nucleotide binding site. Mg(2+) serves as cofactor.

In terms of biological role, implicated in the mating and sporulation pathway. Probably coupled to mating-factor receptors. May act in concert with Ras1. The sequence is that of Guanine nucleotide-binding protein alpha-1 subunit (gpa1) from Schizosaccharomyces pombe (strain 972 / ATCC 24843) (Fission yeast).